The chain runs to 281 residues: tRNA N(3)-cytidine methyltransferase METTL8, mitochondrial (281 aa).

The transit peptide at 1–22 (MNVIWRSCICRLRQGKVPHRCQ) directs the protein to the mitochondrion. K80 participates in a covalent cross-link: Glycyl lysine isopeptide (Lys-Gly) (interchain with G-Cter in SUMO). 2 residues coordinate S-adenosyl-L-methionine: W89 and Y93. The segment covering 139-151 (RTQGTETHCQESF) has biased composition (polar residues). Residues 139 to 180 (RTQGTETHCQESFVSPEPGSRGRSAPDPDLEEYSKGPGKTEP) are disordered. S-adenosyl-L-methionine contacts are provided by G194, D220, and D246.

Belongs to the methyltransferase superfamily. METL family. Interacts with EP300. Absent in embryonic lung but is induced in a fibroblast cell line by stretch. In terms of tissue distribution, expressed in undifferentiated progenitor cells, while its expression is inhibited by stretch. As to expression, absent in undifferentiated embryonic lung mesenchymal cells, but expression is induced by stretch. Expressed in mature adipose tissue.

It is found in the mitochondrion. Its subcellular location is the cytoplasm. The protein localises to the nucleus. The catalysed reaction is cytidine(32) in tRNA(Ser) + S-adenosyl-L-methionine = N(3)-methylcytidine(32) in tRNA(Ser) + S-adenosyl-L-homocysteine + H(+). It carries out the reaction cytidine(32) in tRNA(Thr) + S-adenosyl-L-methionine = N(3)-methylcytidine(32) in tRNA(Thr) + S-adenosyl-L-homocysteine + H(+). It catalyses the reaction a cytidine in mRNA + S-adenosyl-L-methionine = an N(3)-methylcytidine in mRNA + S-adenosyl-L-homocysteine + H(+). In terms of biological role, mitochondrial S-adenosyl-L-methionine-dependent methyltransferase that mediates N(3)-methylcytidine modification of residue 32 of the tRNA anticodon loop of mitochondrial tRNA(Ser)(UCN) and tRNA(Thr). N(3)-methylcytidine methylation modification regulates mitochondrial translation efficiency and is required for activity of the respiratory chain. N(3)-methylcytidine methylation of mitochondrial tRNA(Ser)(UCN) requires the formation of N(6)-dimethylallyladenosine(37) (i6A37) by TRIT1 as prerequisite. May also mediate N(3)-methylcytidine modification of mRNAs. The existence of N(3)-methylcytidine modification on mRNAs is however unclear, and additional evidences are required to confirm the role of the N(3)-methylcytidine-specific mRNA methyltransferase activity of METTL8 in vivo. Its function is as follows. Overexpression in lung progenitor cells stimulates smooth muscle-specific gene expression and suppresses adipogenic gene expression. Functionally, stimulates adipogenesis. This is tRNA N(3)-cytidine methyltransferase METTL8, mitochondrial from Mus musculus (Mouse).